The chain runs to 421 residues: Medium-chain specific acyl-CoA dehydrogenase, mitochondrial (421 aa).

Residues 1–25 constitute a mitochondrion transit peptide; sequence MAAAFGRCCRVLRSISRFHWRSQHT. Lys69 bears the N6-acetyllysine; alternate mark. Lys69 carries the post-translational modification N6-succinyllysine; alternate. 158 to 167 is a binding site for FAD; it reads YCVTEPGAGS. Position 167 (Ser167) interacts with octanoyl-CoA. At Lys179 the chain carries N6-succinyllysine. Residue 191 to 193 coordinates FAD; that stretch reads WIT. An N6-acetyllysine; alternate mark is found at Lys212, Lys217, Lys259, and Lys271. Lys212, Lys217, Lys259, and Lys271 each carry N6-succinyllysine; alternate. Asp278 contacts octanoyl-CoA. Lys279 bears the N6-acetyllysine mark. Arg281 is an octanoyl-CoA binding site. Lys301 bears the N6-acetyllysine mark. FAD contacts are provided by residues 306-308 and 316-317; these read RKT and HQ. Residues Arg349 and Thr351 each contribute to the octanoyl-CoA site. The residue at position 351 (Thr351) is a Phosphothreonine. 374–378 provides a ligand contact to FAD; the sequence is QIFGG. Glu401 serves as a coordination point for octanoyl-CoA. The active-site Proton acceptor is the Glu401. Position 402–405 (402–405) interacts with FAD; the sequence is GTSQ.

It belongs to the acyl-CoA dehydrogenase family. As to quaternary structure, homotetramer. Interacts with the heterodimeric electron transfer flavoprotein ETF. Requires FAD as cofactor. Post-translationally, acetylated. Could occur at proximity of the cofactor-binding sites and reduce the catalytic activity. Could be deacetylated by SIRT3.

It is found in the mitochondrion matrix. The enzyme catalyses a medium-chain 2,3-saturated fatty acyl-CoA + oxidized [electron-transfer flavoprotein] + H(+) = a medium-chain (2E)-enoyl-CoA + reduced [electron-transfer flavoprotein]. It carries out the reaction pentanoyl-CoA + oxidized [electron-transfer flavoprotein] + H(+) = (2E)-pentenoyl-CoA + reduced [electron-transfer flavoprotein]. The catalysed reaction is hexanoyl-CoA + oxidized [electron-transfer flavoprotein] + H(+) = (2E)-hexenoyl-CoA + reduced [electron-transfer flavoprotein]. It catalyses the reaction octanoyl-CoA + oxidized [electron-transfer flavoprotein] + H(+) = (2E)-octenoyl-CoA + reduced [electron-transfer flavoprotein]. The enzyme catalyses decanoyl-CoA + oxidized [electron-transfer flavoprotein] + H(+) = (2E)-decenoyl-CoA + reduced [electron-transfer flavoprotein]. It carries out the reaction dodecanoyl-CoA + oxidized [electron-transfer flavoprotein] + H(+) = (2E)-dodecenoyl-CoA + reduced [electron-transfer flavoprotein]. The catalysed reaction is tetradecanoyl-CoA + oxidized [electron-transfer flavoprotein] + H(+) = (2E)-tetradecenoyl-CoA + reduced [electron-transfer flavoprotein]. It catalyses the reaction oxidized [electron-transfer flavoprotein] + hexadecanoyl-CoA + H(+) = (2E)-hexadecenoyl-CoA + reduced [electron-transfer flavoprotein]. It functions in the pathway lipid metabolism; mitochondrial fatty acid beta-oxidation. Functionally, medium-chain specific acyl-CoA dehydrogenase is one of the acyl-CoA dehydrogenases that catalyze the first step of mitochondrial fatty acid beta-oxidation, an aerobic process breaking down fatty acids into acetyl-CoA and allowing the production of energy from fats. The first step of fatty acid beta-oxidation consists in the removal of one hydrogen from C-2 and C-3 of the straight-chain fatty acyl-CoA thioester, resulting in the formation of trans-2-enoyl-CoA. Electron transfer flavoprotein (ETF) is the electron acceptor that transfers electrons to the main mitochondrial respiratory chain via ETF-ubiquinone oxidoreductase (ETF dehydrogenase). Among the different mitochondrial acyl-CoA dehydrogenases, medium-chain specific acyl-CoA dehydrogenase acts specifically on acyl-CoAs with saturated 6 to 12 carbons long primary chains. The polypeptide is Medium-chain specific acyl-CoA dehydrogenase, mitochondrial (Macaca fascicularis (Crab-eating macaque)).